A 279-amino-acid polypeptide reads, in one-letter code: Putative pyruvate, phosphate dikinase regulatory protein (279 aa).

153–160 (GVSRTSKT) contributes to the ADP binding site.

The protein belongs to the pyruvate, phosphate/water dikinase regulatory protein family. PDRP subfamily.

It carries out the reaction N(tele)-phospho-L-histidyl/L-threonyl-[pyruvate, phosphate dikinase] + ADP = N(tele)-phospho-L-histidyl/O-phospho-L-threonyl-[pyruvate, phosphate dikinase] + AMP + H(+). It catalyses the reaction N(tele)-phospho-L-histidyl/O-phospho-L-threonyl-[pyruvate, phosphate dikinase] + phosphate + H(+) = N(tele)-phospho-L-histidyl/L-threonyl-[pyruvate, phosphate dikinase] + diphosphate. Functionally, bifunctional serine/threonine kinase and phosphorylase involved in the regulation of the pyruvate, phosphate dikinase (PPDK) by catalyzing its phosphorylation/dephosphorylation. This is Putative pyruvate, phosphate dikinase regulatory protein from Rhodopseudomonas palustris (strain HaA2).